A 614-amino-acid chain; its full sequence is Probable pectinesterase/pectinesterase inhibitor 13 (614 aa).

A helical transmembrane segment spans residues 25–45 (IIVGTVSLLVVVAAIVGGAFA). Positions 55 to 102 (QQQQQQQAKNHNKSGSGNNVVKDSDKKSPSPPTPSQKAPVSAAQSVKP) are disordered. 7 N-linked (GlcNAc...) asparagine glycosylation sites follow: Asn-66, Asn-128, Asn-197, Asn-243, Asn-301, Asn-351, and Asn-367. The interval 103–255 (GQGDKIIQTL…QVLTSNSLAL (153 aa)) is pectinesterase inhibitor 13. The segment at 301 to 598 (NATVAKDGSG…YTVGPFLQGD (298 aa)) is pectinesterase 13. Substrate contacts are provided by Thr-376 and Gln-406. Asp-429 acts as the Proton donor; for pectinesterase activity in catalysis. A disulfide bridge connects residues Cys-443 and Cys-463. Asp-450 (nucleophile; for pectinesterase activity) is an active-site residue. The substrate site is built by Arg-518 and Trp-520. N-linked (GlcNAc...) asparagine glycans are attached at residues Asn-522 and Asn-588.

This sequence in the N-terminal section; belongs to the PMEI family. It in the C-terminal section; belongs to the pectinesterase family. As to expression, expressed in flower buds.

The protein resides in the membrane. The enzyme catalyses [(1-&gt;4)-alpha-D-galacturonosyl methyl ester](n) + n H2O = [(1-&gt;4)-alpha-D-galacturonosyl](n) + n methanol + n H(+). The protein operates within glycan metabolism; pectin degradation; 2-dehydro-3-deoxy-D-gluconate from pectin: step 1/5. Functionally, acts in the modification of cell walls via demethylesterification of cell wall pectin. This chain is Probable pectinesterase/pectinesterase inhibitor 13 (PME13), found in Arabidopsis thaliana (Mouse-ear cress).